Reading from the N-terminus, the 196-residue chain is Rho-related GTP-binding protein RhoB (196 aa).

Residue 12–19 participates in GTP binding; that stretch reads GDGACGKT. Tyr-34 carries an O-linked (GlcNAc) tyrosine; by Photorhabdus PAU_02230 glycan. An Effector region motif is present at residues 34 to 42; sequence YVPTVFENY. (Microbial infection) O-linked (Glc) threonine; by C.difficile toxins TcdA and TcdB glycosylation is present at Thr-37. Asn-41 bears the ADP-ribosylasparagine; by botulinum toxin mark. Residues 59-63 and 117-120 contribute to the GTP site; these read DTAGQ and NKKD. The residue at position 154 (Tyr-154) is a Phosphotyrosine. Residues Cys-189 and Cys-192 are each lipidated (S-palmitoyl cysteine). Residue Cys-193 is modified to Cysteine methyl ester. Cys-193 carries the S-farnesyl cysteine; in plasma membrane form lipid modification. Cys-193 carries S-geranylgeranyl cysteine; in endosomal form lipidation. A propeptide spans 194–196 (removed in mature form); sequence KVL.

The protein belongs to the small GTPase superfamily. Rho family. As to quaternary structure, binds ROCK1 and ROCK2. Also binds PKN1/PRK1. Interacts with ARGGEF3. Interacts with RTKN. Interacts with AKAP13. Interacts with RIPOR1. In terms of processing, prenylation specifies the subcellular location of RHOB. The farnesylated form is localized to the plasma membrane while the geranylgeranylated form is localized to the endosome. (Microbial infection) Glycosylated at Tyr-34 by Photorhabdus asymbiotica toxin PAU_02230. Mono-O-GlcNAcylation by PAU_02230 inhibits downstream signaling by an impaired interaction with diverse regulator and effector proteins of Rho and leads to actin disassembly. Post-translationally, (Microbial infection) Glucosylated at Thr-37 by C.difficile toxins TcdA and TcdB in the colonic epithelium. Monoglucosylation completely prevents the recognition of the downstream effector, blocking the GTPases in their inactive form, leading to actin cytoskeleton disruption.

It localises to the late endosome membrane. The protein localises to the cell membrane. The protein resides in the nucleus. It is found in the cleavage furrow. Its function is as follows. Mediates apoptosis in neoplastically transformed cells after DNA damage. Not essential for development but affects cell adhesion and growth factor signaling in transformed cells. Plays a negative role in tumorigenesis as deletion causes tumor formation. Involved in intracellular protein trafficking of a number of proteins. Targets PKN1 to endosomes and is involved in trafficking of the EGF receptor from late endosomes to lysosomes. Also required for stability and nuclear trafficking of AKT1/AKT which promotes endothelial cell survival during vascular development. Serves as a microtubule-dependent signal that is required for the myosin contractile ring formation during cell cycle cytokinesis. Required for genotoxic stress-induced cell death in breast cancer cells. This Homo sapiens (Human) protein is Rho-related GTP-binding protein RhoB (RHOB).